A 705-amino-acid polypeptide reads, in one-letter code: tRNA 5-methylaminomethyl-2-thiouridine biosynthesis bifunctional protein MnmC (705 aa).

The tRNA (mnm(5)s(2)U34)-methyltransferase stretch occupies residues 1-241; that stretch reads MTIKTADIQF…KREMLAGIIA (241 aa). The tract at residues 289 to 705 is FAD-dependent cmnm(5)s(2)U34 oxidoreductase; that stretch reads IGAGIAGASM…LIRQLIRREV (417 aa).

It in the N-terminal section; belongs to the methyltransferase superfamily. tRNA (mnm(5)s(2)U34)-methyltransferase family. In the C-terminal section; belongs to the DAO family. The cofactor is FAD.

It localises to the cytoplasm. The catalysed reaction is 5-aminomethyl-2-thiouridine(34) in tRNA + S-adenosyl-L-methionine = 5-methylaminomethyl-2-thiouridine(34) in tRNA + S-adenosyl-L-homocysteine + H(+). Functionally, catalyzes the last two steps in the biosynthesis of 5-methylaminomethyl-2-thiouridine (mnm(5)s(2)U) at the wobble position (U34) in tRNA. Catalyzes the FAD-dependent demodification of cmnm(5)s(2)U34 to nm(5)s(2)U34, followed by the transfer of a methyl group from S-adenosyl-L-methionine to nm(5)s(2)U34, to form mnm(5)s(2)U34. The sequence is that of tRNA 5-methylaminomethyl-2-thiouridine biosynthesis bifunctional protein MnmC from Pseudoalteromonas atlantica (strain T6c / ATCC BAA-1087).